Consider the following 535-residue polypeptide: Bifunctional purine biosynthesis protein PurH (535 aa).

The 146-residue stretch at 6-151 folds into the MGS-like domain; it reads TRLPVRRALI…KNHKDVAIVV (146 aa).

Belongs to the PurH family.

The enzyme catalyses (6R)-10-formyltetrahydrofolate + 5-amino-1-(5-phospho-beta-D-ribosyl)imidazole-4-carboxamide = 5-formamido-1-(5-phospho-D-ribosyl)imidazole-4-carboxamide + (6S)-5,6,7,8-tetrahydrofolate. The catalysed reaction is IMP + H2O = 5-formamido-1-(5-phospho-D-ribosyl)imidazole-4-carboxamide. It functions in the pathway purine metabolism; IMP biosynthesis via de novo pathway; 5-formamido-1-(5-phospho-D-ribosyl)imidazole-4-carboxamide from 5-amino-1-(5-phospho-D-ribosyl)imidazole-4-carboxamide (10-formyl THF route): step 1/1. Its pathway is purine metabolism; IMP biosynthesis via de novo pathway; IMP from 5-formamido-1-(5-phospho-D-ribosyl)imidazole-4-carboxamide: step 1/1. This Pseudomonas putida (strain ATCC 700007 / DSM 6899 / JCM 31910 / BCRC 17059 / LMG 24140 / F1) protein is Bifunctional purine biosynthesis protein PurH.